We begin with the raw amino-acid sequence, 537 residues long: MFKREEIIEMANKDFEKAWIETKGLIKSKRVNESYPRIKPIFGKTHPVNDTIENLRQAYLRMGFEEYINPVIVDERDIYKQFGPEAMAVLDRCFYLAGLPRPDVGLSDEKISQIEKLGINVSCHKESLQKILHGYKKGTLDGDDLVLEISKALEISSEMGLKILEEVFPEFKDLIAVSSKLTLRSHMTSGWFITLSELNGKKPLPFKLFSIDRCFRREQKEDKSHLMTYHSASCVIAGKDVDINDGKAVAEGLLSQFGFTNFKFIPDEKKSKYYTPETQTEVYAYHPKLKEWLEVATFGVYSPVALSKYGIDVPVMNLGLGVERLSMISGNFEDVREMVYPQFYEQSLSDRAISSMVKFDKVPVLDEIYDLTKELIDLCVKNKDITSPCNLKLEKTFIFGKTKKNVKIIVFEKEENKKLLGPSILNEIYVYDGNIIGIPETFEGVKEEFKEFLEKGKVEGVTTGIRYIDALCFKITSKVEEAFVSNTSEFKLKVPIVRSLSDINLKIEEIALKQIMSKNKVIDVRGPVFLNVEVKIE.

Substrate contacts are provided by residues 186–188 (HMT), 231–233 (SAS), 273–274 (YY), and asparagine 317.

This sequence belongs to the class-II aminoacyl-tRNA synthetase family. O-phosphoseryl-tRNA(Cys) synthetase subfamily. In terms of assembly, homotetramer. Interacts with SepCysS.

The enzyme catalyses tRNA(Cys) + O-phospho-L-serine + ATP = O-phospho-L-seryl-tRNA(Cys) + AMP + diphosphate. Catalyzes the attachment of O-phosphoserine (Sep) to tRNA(Cys). This is O-phosphoserine--tRNA(Cys) ligase from Methanococcus vannielii (strain ATCC 35089 / DSM 1224 / JCM 13029 / OCM 148 / SB).